The primary structure comprises 327 residues: Phenylalanine--tRNA ligase alpha subunit (327 aa).

Glu252 lines the Mg(2+) pocket.

This sequence belongs to the class-II aminoacyl-tRNA synthetase family. Phe-tRNA synthetase alpha subunit type 1 subfamily. In terms of assembly, tetramer of two alpha and two beta subunits. The cofactor is Mg(2+).

It is found in the cytoplasm. The enzyme catalyses tRNA(Phe) + L-phenylalanine + ATP = L-phenylalanyl-tRNA(Phe) + AMP + diphosphate + H(+). The polypeptide is Phenylalanine--tRNA ligase alpha subunit (Vibrio vulnificus (strain CMCP6)).